The chain runs to 1271 residues: Zinc finger transcription factor Trps1 (1271 aa).

Disordered regions lie at residues 1 to 76 (MVRK…DSAS) and 124 to 155 (SPIK…DMSP). Positions 34 to 49 (SKEISTDPMQENSEQS) are enriched in polar residues. Basic and acidic residues predominate over residues 54–65 (HNSDDHSFHDQE). A compositionally biased stretch (polar residues) spans 66–76 (PSSSINKDSAS). The C2H2-type 1; atypical zinc-finger motif lies at 217-242 (FKCNICGYGYYGNDPTDLIKHFRKYH). The C2H2-type 2; atypical zinc-finger motif lies at 328–353 (FRCKFCNFTYLAKSATELEQHFLKTH). The tract at residues 353 to 387 (HPNKMKMSSDSGKPSEKSTNKSSPIPRSCEPGDLG) is disordered. The segment at 426 to 451 (YWCKFCSFSCESSSNSKLLEHHSKQH) adopts a C2H2-type 3; atypical zinc-finger fold. A C2H2-type 4; atypical zinc finger spans residues 513 to 543 (YNCQFCDFRYSKSHGPEVILVGPLLRHYQQH). 3 C2H2-type zinc fingers span residues 604-627 (HQCD…ENAH), 656-679 (HSCT…RRVH), and 682-705 (YKCR…NSAH). Positions 843–877 (GVTAGASGEKSGQHTPQYPTAGDSKSKDESQSLLR) are disordered. Residues 886–910 (CANCLTTKTSLWRKNANGGYVCNAC) form a GATA-type zinc finger. 3 disordered regions span residues 938 to 987 (RTRK…RENQ), 1031 to 1064 (SPQE…YMRP), and 1154 to 1196 (LDLA…EKSD). Residues 972-985 (IRSEDHSMEGHQRE) are compositionally biased toward basic and acidic residues. Low complexity predominate over residues 1031-1049 (SPQESSGEPGNSSSVSDGK). 2 stretches are compositionally biased toward basic and acidic residues: residues 1050–1062 (GSSE…EKYM) and 1170–1196 (DSKE…EKSD). The interval 1153 to 1271 (PLDLAMKHSR…QAEKNGKNKD (119 aa)) is transcriptional repressor domain. Glycyl lysine isopeptide (Lys-Gly) (interchain with G-Cter in SUMO) cross-links involve residues Lys-1182 and Lys-1191. 2 C2H2-type zinc fingers span residues 1205 to 1227 (TKCV…MSCH) and 1233 to 1257 (FQCS…RGLH).

As to quaternary structure, binds specifically to GATA sequences. In terms of processing, sumoylated. Sumoylation in the repressor domain inhibits the transcription repression activity. Sumoylation on Lys-1191 is the major site. Appears to be sumoylated on multiple sites.

It is found in the nucleus. Transcriptional repressor. Represses expression of GATA-regulated genes at selected sites and stages in vertebrate development. This chain is Zinc finger transcription factor Trps1 (trps1), found in Xenopus laevis (African clawed frog).